A 471-amino-acid chain; its full sequence is Monocarboxylate transporter 4 (471 aa).

Residues 1 to 17 (MGGAVVDEGPTGIKAPD) are Cytoplasmic-facing. Residues 18–38 (GGWGWAVLFGCFIITGFSYAF) form a helical membrane-spanning segment. The Extracellular segment spans residues 39 to 61 (PKAVSVFFKELMHEFGIGYSDTA). A helical transmembrane segment spans residues 62–82 (WISSILLAMLYGTGPLCSMCV). Over 83-84 (NR) the chain is Cytoplasmic. A helical transmembrane segment spans residues 85–105 (FGCRPVMLVGGLFASLGMVAA). Topologically, residues 106 to 109 (SFCR) are extracellular. Residues 110 to 130 (SIIQIYLTTGVITGLGLALNF) form a helical membrane-spanning segment. At 131 to 149 (QPSLIMLNRYFNKRRPMAN) the chain is on the cytoplasmic side. The chain crosses the membrane as a helical span at residues 150-170 (GLAAAGSPVFLCALSPLGQLL). Residues 171 to 179 (QDHYGWRGG) lie on the Extracellular side of the membrane. The helical transmembrane segment at 180–200 (FLILGGLLLNCCVCAALMRPL) threads the bilayer. At 201–231 (VAPQASGGAEPHGPQRPSPRLLDLSVFRDRG) the chain is on the cytoplasmic side. Residues 232–252 (FLIYAVAASIMVLGLFVPPVF) form a helical membrane-spanning segment. The Extracellular segment spans residues 253–267 (VVSYAKDMGVPDTKA). The helical transmembrane segment at 268–288 (AFLLTILGFIDIFARPTAGFI) threads the bilayer. Over 289-298 (TGLKKVRPYS) the chain is Cytoplasmic. The chain crosses the membrane as a helical span at residues 299 to 319 (VYLFSFAMFFNGFTDLTGSTA). The Extracellular segment spans residues 320–321 (SD). The chain crosses the membrane as a helical span at residues 322-342 (YGGLVVFCIFFGISYGMVGAL). At 343–355 (QFEVLMAIVGTQK) the chain is on the cytoplasmic side. The chain crosses the membrane as a helical span at residues 356 to 376 (FSSAIGLVLLLEAVAVLIGPP). The Extracellular portion of the chain corresponds to 377-391 (SGGKLLDATKVYKYV). The chain crosses the membrane as a helical span at residues 392–412 (FILAGAEVLTSSLVLLLGNFF). The Cytoplasmic segment spans residues 413–471 (CIGKRKRPEVTKPEEVASEEEKLHKPPVDVRVDSREVEHFLKAEPEKNGEVVHTPETSV). Basolateral sorting signal regions lie at residues 429–447 (ASEE…VDSR) and 447–471 (REVE…ETSV). Ser430 bears the Phosphoserine mark. Phosphothreonine is present on Thr466. Ser470 bears the Phosphoserine mark.

It belongs to the major facilitator superfamily. Monocarboxylate porter (TC 2.A.1.13) family. As to quaternary structure, interacts with BSG; interaction mediates SLC16A3 targeting to the plasma membrane. In terms of tissue distribution, detected in testis, small intestine, parotid gland, lung and brain. Small amounts are detected in heart, kidney and spleen. Expressed in skeletal muscle.

It is found in the cell membrane. It localises to the basolateral cell membrane. The catalysed reaction is (S)-lactate(in) + H(+)(in) = (S)-lactate(out) + H(+)(out). It catalyses the reaction pyruvate(out) + H(+)(out) = pyruvate(in) + H(+)(in). Its function is as follows. Proton-dependent transporter of monocarboxylates such as L-lactate and pyruvate. Plays a predominant role in the L-lactate efflux from highly glycolytic cells. In Rattus norvegicus (Rat), this protein is Monocarboxylate transporter 4 (Slc16a3).